We begin with the raw amino-acid sequence, 416 residues long: Enterobactin exporter EntS (416 aa).

The Cytoplasmic portion of the chain corresponds to 1 to 21; that stretch reads MNKQSWLLNLSLLKTHPAFRA. Residues 22 to 42 traverse the membrane as a helical segment; that stretch reads VFLARFISIVSLGLLGVAVPV. Residues 43 to 55 lie on the Periplasmic side of the membrane; the sequence is QIQMMTHSTWQVG. Residues 56–76 form a helical membrane-spanning segment; that stretch reads LSVTLTGGAMFVGLMVGGVLA. The Cytoplasmic segment spans residues 77 to 83; the sequence is DRYERKK. The helical transmembrane segment at 84-104 threads the bilayer; the sequence is VILLARGTCGIGFIGLCLNAL. Residues 105-109 are Periplasmic-facing; that stretch reads LPEPS. The chain crosses the membrane as a helical span at residues 110-130; it reads LLAIYLLGLWDGFFASLGVTA. Residues 131 to 156 lie on the Cytoplasmic side of the membrane; sequence LLAATPALVGRENLMQAGAITMLTVR. A helical transmembrane segment spans residues 157-177; sequence LGSVISPMIGGLLLATGGVAW. Position 178 (Asn-178) is a topological domain, periplasmic. Residues 179 to 199 traverse the membrane as a helical segment; that stretch reads YGLAAAGTFITLLPLLSLPAL. Topologically, residues 200 to 218 are cytoplasmic; it reads PPPPQPREHPLKSLLAGFR. A helical transmembrane segment spans residues 219 to 239; that stretch reads FLLASPLVGGIALLGGLLTMA. Residues 240–256 are Periplasmic-facing; the sequence is SAVRVLYPALADNWQMS. Residues 257–277 form a helical membrane-spanning segment; sequence AAQIGFLYAAIPLGAAIGALT. At 278–287 the chain is on the cytoplasmic side; it reads SGKLAHSARP. Residues 288–307 form a helical membrane-spanning segment; it reads GLLMLLSTLGSFLAIGLFGL. The Periplasmic portion of the chain corresponds to 308–313; sequence MPMWIL. Residues 314–336 form a helical membrane-spanning segment; that stretch reads GVICLALFGWLSAVSSLLQYTML. At 337-356 the chain is on the cytoplasmic side; it reads QTQTPEAMLGRINGLWTAQN. Residues 357-377 form a helical membrane-spanning segment; the sequence is VTGDAIGAALLGGLGAMMTPV. Position 378 (Ala-378) is a topological domain, periplasmic. The chain crosses the membrane as a helical span at residues 379–399; sequence SASASGFGLLIIGVLLLLVLV. Residues 400–416 are Cytoplasmic-facing; it reads ELRRFRQTPPQVTASDS.

The protein belongs to the major facilitator superfamily. EntS (TC 2.A.1.38) family.

Its subcellular location is the cell inner membrane. In terms of biological role, component of an export pathway for enterobactin. This is Enterobactin exporter EntS from Escherichia coli O81 (strain ED1a).